Consider the following 59-residue polypeptide: Large ribosomal subunit protein uL30 (59 aa).

The protein belongs to the universal ribosomal protein uL30 family. As to quaternary structure, part of the 50S ribosomal subunit.

This is Large ribosomal subunit protein uL30 from Leptospira borgpetersenii serovar Hardjo-bovis (strain JB197).